We begin with the raw amino-acid sequence, 98 residues long: NADH-ubiquinone oxidoreductase chain 4L (98 aa).

The next 3 helical transmembrane spans lie at 1–21, 29–49, and 61–81; these read MPYI…GMLI, SLLC…LTIL, and IILL…LVMV.

This sequence belongs to the complex I subunit 4L family. In terms of assembly, core subunit of respiratory chain NADH dehydrogenase (Complex I) which is composed of 45 different subunits.

Its subcellular location is the mitochondrion inner membrane. The enzyme catalyses a ubiquinone + NADH + 5 H(+)(in) = a ubiquinol + NAD(+) + 4 H(+)(out). Its function is as follows. Core subunit of the mitochondrial membrane respiratory chain NADH dehydrogenase (Complex I) which catalyzes electron transfer from NADH through the respiratory chain, using ubiquinone as an electron acceptor. Part of the enzyme membrane arm which is embedded in the lipid bilayer and involved in proton translocation. The sequence is that of NADH-ubiquinone oxidoreductase chain 4L (MT-ND4L) from Cephalopachus bancanus (Western tarsier).